The sequence spans 284 residues: Acetylglutamate kinase (284 aa).

Residues 66–67 (GG), R88, and N179 contribute to the substrate site.

This sequence belongs to the acetylglutamate kinase family. ArgB subfamily.

The protein localises to the cytoplasm. It carries out the reaction N-acetyl-L-glutamate + ATP = N-acetyl-L-glutamyl 5-phosphate + ADP. It functions in the pathway amino-acid biosynthesis; L-arginine biosynthesis; N(2)-acetyl-L-ornithine from L-glutamate: step 2/4. Its function is as follows. Catalyzes the ATP-dependent phosphorylation of N-acetyl-L-glutamate. The sequence is that of Acetylglutamate kinase from Actinobacillus pleuropneumoniae serotype 7 (strain AP76).